The chain runs to 809 residues: Trimethylamine-N-oxide reductase 2 (809 aa).

Residues 1–31 (MTLTRREFIKHSGIAAGALVVTSAAPLPAWA) constitute a signal peptide (tat-type signal). Mo-bis(molybdopterin guanine dinucleotide) is bound at residue Ser-176.

This sequence belongs to the prokaryotic molybdopterin-containing oxidoreductase family. The cofactor is Mo-bis(molybdopterin guanine dinucleotide). Post-translationally, predicted to be exported by the Tat system. The position of the signal peptide cleavage has not been experimentally proven.

The protein localises to the periplasm. The catalysed reaction is trimethylamine + 2 Fe(III)-[cytochrome c] + H2O = trimethylamine N-oxide + 2 Fe(II)-[cytochrome c] + 3 H(+). Functionally, reduces trimethylamine-N-oxide (TMAO) into trimethylamine; an anaerobic reaction coupled to energy-yielding reactions. Can also reduce other N- and S-oxide compounds such as 4-methylmorpholine-N-oxide and biotin sulfoxide (BSO), but with a lower catalytic efficiency. This Escherichia coli O157:H7 protein is Trimethylamine-N-oxide reductase 2 (torZ).